Here is a 20-residue protein sequence, read N- to C-terminus: ATP synthase subunit beta, chloroplastic (20 aa).

The span at 1-10 (METTNESLGY) shows a compositional bias: polar residues. The disordered stretch occupies residues 1–20 (METTNESLGYTDQIIGPVLD).

Belongs to the ATPase alpha/beta chains family. As to quaternary structure, F-type ATPases have 2 components, CF(1) - the catalytic core - and CF(0) - the membrane proton channel. CF(1) has five subunits: alpha(3), beta(3), gamma(1), delta(1), epsilon(1). CF(0) has four main subunits: a(1), b(1), b'(1) and c(9-12).

It localises to the plastid. The protein localises to the chloroplast thylakoid membrane. The catalysed reaction is ATP + H2O + 4 H(+)(in) = ADP + phosphate + 5 H(+)(out). Its function is as follows. Produces ATP from ADP in the presence of a proton gradient across the membrane. The catalytic sites are hosted primarily by the beta subunits. The polypeptide is ATP synthase subunit beta, chloroplastic (Chattonella marina var. antiqua (Red tide flagellate)).